The primary structure comprises 181 residues: ATP-dependent protease subunit HslV (181 aa).

Residue Thr-7 is part of the active site. The Na(+) site is built by Gly-164, Cys-167, and Thr-170.

This sequence belongs to the peptidase T1B family. HslV subfamily. In terms of assembly, a double ring-shaped homohexamer of HslV is capped on each side by a ring-shaped HslU homohexamer. The assembly of the HslU/HslV complex is dependent on binding of ATP.

It is found in the cytoplasm. The enzyme catalyses ATP-dependent cleavage of peptide bonds with broad specificity.. Allosterically activated by HslU binding. Its function is as follows. Protease subunit of a proteasome-like degradation complex believed to be a general protein degrading machinery. The chain is ATP-dependent protease subunit HslV from Shouchella clausii (strain KSM-K16) (Alkalihalobacillus clausii).